Here is a 184-residue protein sequence, read N- to C-terminus: Oligoribonuclease (184 aa).

Residues 10-172 (LVWVDCEMTG…ADVLESIAEL (163 aa)) enclose the Exonuclease domain. Residue Tyr129 is part of the active site.

Belongs to the oligoribonuclease family.

It is found in the cytoplasm. In terms of biological role, 3'-to-5' exoribonuclease specific for small oligoribonucleotides. The polypeptide is Oligoribonuclease (Tropheryma whipplei (strain Twist) (Whipple's bacillus)).